The chain runs to 127 residues: MNCYETLFVVKPTLTEEETAAEIAKIKDVLAKVDAELLATDDMGMRKLAYPVQKNDRGYYTVLFYKANGEAIAEIERNLKINEEVIKFLTVKYVKNKEIAQFDKLVAAANKSKDAEPAEPKAETTEA.

This sequence belongs to the bacterial ribosomal protein bS6 family.

Binds together with bS18 to 16S ribosomal RNA. The chain is Small ribosomal subunit protein bS6 from Sulfurovum sp. (strain NBC37-1).